The sequence spans 365 residues: Testis-specific serine/threonine-protein kinase 1 (365 aa).

In terms of domain architecture, Protein kinase spans 12–272 (YIMGINLGEG…IDEILNHCWV (261 aa)). Residues 18–26 (LGEGSYAKV) and Lys-41 contribute to the ATP site. The active-site Proton acceptor is Asp-136. The residue at position 174 (Thr-174) is a Phosphothreonine. The segment at 282–365 (GAINKEGESS…HPQQPSETHT (84 aa)) is disordered. A compositionally biased stretch (basic and acidic residues) spans 303–330 (GADKKSATKLEPREEARSEARSESKPQE). Residues 331 to 347 (DTLQVVRQSENVGLSSE) show a composition bias toward polar residues.

This sequence belongs to the protein kinase superfamily. CAMK Ser/Thr protein kinase family. In terms of assembly, interacts with TSSK2. Interacts with HSP90; this interaction stabilizes TSSK1. Requires Mg(2+) as cofactor. Autophosphorylated. Post-translationally, ubiquitinated; HSP90 activity negatively regulates ubiquitination and degradation. In terms of tissue distribution, testis-specific. Expressed only in postmeiotic spermatids at the final stages of cytodifferentiation in the seminiferous tubules (at protein level). Not detected in released sperms in the lumen of the seminiferous tubules and the epididymis.

It is found in the cytoplasm. The protein resides in the cytoplasmic vesicle. It localises to the secretory vesicle. Its subcellular location is the acrosome. The protein localises to the cell projection. It is found in the cilium. The protein resides in the flagellum. It carries out the reaction L-seryl-[protein] + ATP = O-phospho-L-seryl-[protein] + ADP + H(+). The catalysed reaction is L-threonyl-[protein] + ATP = O-phospho-L-threonyl-[protein] + ADP + H(+). With respect to regulation, activated by phosphorylation on Thr-174, potentially by autophosphorylation. Functionally, testis-specific serine/threonine-protein kinase required during spermatid development. Phosphorylates 'Ser-281' of TSKS. Involved in the late stages of spermatogenesis, during the reconstruction of the cytoplasm. During spermatogenesis, required for the transformation of a ring-shaped structure around the base of the flagellum originating from the chromatoid body. The polypeptide is Testis-specific serine/threonine-protein kinase 1 (Tssk1b) (Mus musculus (Mouse)).